We begin with the raw amino-acid sequence, 673 residues long: UvrABC system protein B (673 aa).

One can recognise a Helicase ATP-binding domain in the interval 26–414 (ANFEAGLAKQ…AGEITELVVR (389 aa)). An ATP-binding site is contributed by 39–46 (GVTGSGKT). The Beta-hairpin signature appears at 92–115 (YYDYYQPEAYVPSSDTFIEKDSSI). The Helicase C-terminal domain maps to 431–597 (QVDDLMSEVH…SVARPISDIM (167 aa)). The disordered stretch occupies residues 601-626 (REDAAEKKAGKGRSKSRQVAEEPADY). The 36-residue stretch at 635 to 670 (AGKLKALEQKMYQHAKDLEFEAAAQIRDQILKLKAA) folds into the UVR domain.

It belongs to the UvrB family. In terms of assembly, forms a heterotetramer with UvrA during the search for lesions. Interacts with UvrC in an incision complex.

It localises to the cytoplasm. The UvrABC repair system catalyzes the recognition and processing of DNA lesions. A damage recognition complex composed of 2 UvrA and 2 UvrB subunits scans DNA for abnormalities. Upon binding of the UvrA(2)B(2) complex to a putative damaged site, the DNA wraps around one UvrB monomer. DNA wrap is dependent on ATP binding by UvrB and probably causes local melting of the DNA helix, facilitating insertion of UvrB beta-hairpin between the DNA strands. Then UvrB probes one DNA strand for the presence of a lesion. If a lesion is found the UvrA subunits dissociate and the UvrB-DNA preincision complex is formed. This complex is subsequently bound by UvrC and the second UvrB is released. If no lesion is found, the DNA wraps around the other UvrB subunit that will check the other stand for damage. This is UvrABC system protein B from Xanthomonas campestris pv. campestris (strain 8004).